The chain runs to 104 residues: Large ribosomal subunit protein bL21 (104 aa).

This sequence belongs to the bacterial ribosomal protein bL21 family. In terms of assembly, part of the 50S ribosomal subunit. Contacts protein L20.

In terms of biological role, this protein binds to 23S rRNA in the presence of protein L20. This is Large ribosomal subunit protein bL21 from Lactococcus lactis subsp. lactis (strain IL1403) (Streptococcus lactis).